Here is a 170-residue protein sequence, read N- to C-terminus: Ubiquinone/menaquinone biosynthesis C-methyltransferase UbiE (170 aa).

Basic and acidic residues predominate over residues 1 to 12; the sequence is MNDQRKGDHAEP. Residues 1–22 are disordered; it reads MNDQRKGDHAEPTTHFGYQDVP.

This sequence belongs to the class I-like SAM-binding methyltransferase superfamily. MenG/UbiE family.

It carries out the reaction a 2-demethylmenaquinol + S-adenosyl-L-methionine = a menaquinol + S-adenosyl-L-homocysteine + H(+). The catalysed reaction is a 2-methoxy-6-(all-trans-polyprenyl)benzene-1,4-diol + S-adenosyl-L-methionine = a 5-methoxy-2-methyl-3-(all-trans-polyprenyl)benzene-1,4-diol + S-adenosyl-L-homocysteine + H(+). It functions in the pathway quinol/quinone metabolism; menaquinone biosynthesis; menaquinol from 1,4-dihydroxy-2-naphthoate: step 2/2. The protein operates within cofactor biosynthesis; ubiquinone biosynthesis. Functionally, methyltransferase required for the conversion of demethylmenaquinol (DMKH2) to menaquinol (MKH2) and the conversion of 2-polyprenyl-6-methoxy-1,4-benzoquinol (DDMQH2) to 2-polyprenyl-3-methyl-6-methoxy-1,4-benzoquinol (DMQH2). This chain is Ubiquinone/menaquinone biosynthesis C-methyltransferase UbiE (ubiE), found in Ectopseudomonas oleovorans (Pseudomonas oleovorans).